The chain runs to 354 residues: GTPase Obg (354 aa).

Positions 1–159 (MQFIDHAEIE…KQLRLELKLL (159 aa)) constitute an Obg domain. The region spanning 160–328 (AEVGIIGLPN…LLQEIWDVLD (169 aa)) is the OBG-type G domain. GTP is bound by residues 166 to 173 (GLPNAGKS), 191 to 195 (FTTLI), 213 to 216 (DIPG), 280 to 283 (NKLD), and 309 to 311 (SAV). Mg(2+)-binding residues include Ser173 and Thr193.

It belongs to the TRAFAC class OBG-HflX-like GTPase superfamily. OBG GTPase family. In terms of assembly, monomer. The cofactor is Mg(2+).

It is found in the cytoplasm. An essential GTPase which binds GTP, GDP and possibly (p)ppGpp with moderate affinity, with high nucleotide exchange rates and a fairly low GTP hydrolysis rate. Plays a role in control of the cell cycle, stress response, ribosome biogenesis and in those bacteria that undergo differentiation, in morphogenesis control. The polypeptide is GTPase Obg (Picosynechococcus sp. (strain ATCC 27264 / PCC 7002 / PR-6) (Agmenellum quadruplicatum)).